We begin with the raw amino-acid sequence, 1131 residues long: Filamin A-interacting protein 1-like (1131 aa).

Residues 1-62 (MRSRSSNAEG…KSHTGKGHHT (62 aa)) form a disordered region. A compositionally biased stretch (basic and acidic residues) spans 50 to 62 (VSEKSHTGKGHHT). 2 coiled-coil regions span residues 139–583 (NELD…LSKV) and 610–780 (SKST…KSLR). Serine 789 bears the Phosphoserine mark. 2 positions are modified to phosphothreonine: threonine 984 and threonine 992. At serine 1050 the chain carries Phosphoserine.

This sequence belongs to the FILIP1 family.

The protein localises to the cytoplasm. It is found in the membrane. It localises to the nucleus. Acts as a regulator of the antiangiogenic activity on endothelial cells. When overexpressed in endothelial cells, leads to inhibition of cell proliferation and migration and an increase in apoptosis. Inhibits melanoma growth When expressed in tumor-associated vasculature. The sequence is that of Filamin A-interacting protein 1-like (Filip1l) from Mus musculus (Mouse).